A 130-amino-acid chain; its full sequence is Small ribosomal subunit protein uS11c (130 aa).

This sequence belongs to the universal ribosomal protein uS11 family. As to quaternary structure, part of the 30S ribosomal subunit.

The protein resides in the plastid. It is found in the chloroplast. The sequence is that of Small ribosomal subunit protein uS11c from Nephroselmis olivacea (Green alga).